Consider the following 229-residue polypeptide: Adenylate kinase (229 aa).

10-15 (GSGKGT) is an ATP binding site. The segment at 30-59 (ESGVIFREHISKGTELGKQAKSYIDKGELV) is NMP. AMP is bound by residues S31, R36, 57-59 (ELV), 84-87 (GFPR), and Q91. The segment at 125–164 (GRRICKTNNNHPNNVSIDSIKPDGNNCRVCHGELIVRTDD) is LID. R126 is a binding site for ATP. R161 and R173 together coordinate AMP. Residue N209 participates in ATP binding.

The protein belongs to the adenylate kinase family. Monomer.

The protein resides in the cytoplasm. It catalyses the reaction AMP + ATP = 2 ADP. The protein operates within purine metabolism; AMP biosynthesis via salvage pathway; AMP from ADP: step 1/1. Catalyzes the reversible transfer of the terminal phosphate group between ATP and AMP. Plays an important role in cellular energy homeostasis and in adenine nucleotide metabolism. The polypeptide is Adenylate kinase (Lawsonia intracellularis (strain PHE/MN1-00)).